Here is a 265-residue protein sequence, read N- to C-terminus: Translation initiation factor 2 subunit alpha (265 aa).

Residues 12 to 82 (GELVIGTVKK…KMRVVEVSLK (71 aa)) form the S1 motif domain.

Belongs to the eIF-2-alpha family. In terms of assembly, heterotrimer composed of an alpha, a beta and a gamma chain.

EIF-2 functions in the early steps of protein synthesis by forming a ternary complex with GTP and initiator tRNA. The chain is Translation initiation factor 2 subunit alpha from Pyrobaculum aerophilum (strain ATCC 51768 / DSM 7523 / JCM 9630 / CIP 104966 / NBRC 100827 / IM2).